Here is a 113-residue protein sequence, read N- to C-terminus: Cell cycle protein GpsB (113 aa).

A coiled-coil region spans residues 36–68 (LDMVIKDYSTFTQEIEALQAENIRLVQELDNAP).

This sequence belongs to the GpsB family. As to quaternary structure, forms polymers through the coiled coil domains. Interacts with PBP1, MreC and EzrA.

The protein localises to the cytoplasm. Its function is as follows. Divisome component that associates with the complex late in its assembly, after the Z-ring is formed, and is dependent on DivIC and PBP2B for its recruitment to the divisome. Together with EzrA, is a key component of the system that regulates PBP1 localization during cell cycle progression. Its main role could be the removal of PBP1 from the cell pole after pole maturation is completed. Also contributes to the recruitment of PBP1 to the division complex. Not essential for septum formation. The protein is Cell cycle protein GpsB of Listeria innocua serovar 6a (strain ATCC BAA-680 / CLIP 11262).